The following is a 131-amino-acid chain: MAARGGKKEPPDAVHLNRLLYERVRKELRCQRLHTEHSINPLRPVHAVTQKPMSWHDNIEEPADARFLNIIHQAALEPTKKYSEPQTESQEIGWNTTPLTDVDRTDRRLFFPRRRTEITMHSAAGGHPKKQ.

Residues 79–99 (TKKYSEPQTESQEIGWNTTPL) are disordered. A compositionally biased stretch (polar residues) spans 84–99 (EPQTESQEIGWNTTPL).

This sequence belongs to the CFAP144 family. Expressed in choroid plexus (at protein level). Expressed by motile ciliated cells in choroid plexus.

The protein localises to the cytoplasm. The protein resides in the cytoskeleton. Its subcellular location is the cilium axoneme. It localises to the flagellum axoneme. Its function is as follows. Microtubule inner protein (MIP) part of the dynein-decorated doublet microtubules (DMTs) in cilia axoneme, which is required for motile cilia beating. This chain is Cilia- and flagella-associated protein 144 (CFAP144), found in Gallus gallus (Chicken).